The chain runs to 205 residues: Protein TON_1965 (205 aa).

The region spanning 7 to 201 (EWGEFLVRLA…EEYPKGPVKR (195 aa)) is the AMMECR1 domain.

This Thermococcus onnurineus (strain NA1) protein is Protein TON_1965.